The following is a 330-amino-acid chain: Phenylalanine--tRNA ligase alpha subunit (330 aa).

A Mg(2+)-binding site is contributed by Glu254.

It belongs to the class-II aminoacyl-tRNA synthetase family. Phe-tRNA synthetase alpha subunit type 1 subfamily. In terms of assembly, tetramer of two alpha and two beta subunits. Requires Mg(2+) as cofactor.

Its subcellular location is the cytoplasm. It catalyses the reaction tRNA(Phe) + L-phenylalanine + ATP = L-phenylalanyl-tRNA(Phe) + AMP + diphosphate + H(+). The protein is Phenylalanine--tRNA ligase alpha subunit (pheS) of Neisseria meningitidis serogroup A / serotype 4A (strain DSM 15465 / Z2491).